A 133-amino-acid chain; its full sequence is Glycophorin-A (133 aa).

2 O-linked (GalNAc...) threonine glycosylation sites follow: threonine 1 and threonine 6. The tract at residues 1 to 34 is disordered; the sequence is TETPVTGEQGSATPGNVSNATVTAGKPSATSPGV. At 1–62 the chain is on the extracellular side; that stretch reads TETPVTGEQG…SYHQDFSHAE (62 aa). O-linked (GalNAc...) serine glycosylation occurs at serine 11. Residue threonine 13 is glycosylated (O-linked (GalNAc...) threonine). N-linked (GlcNAc...) asparagine glycosylation occurs at asparagine 19. 3 O-linked (GalNAc...) threonine glycosylation sites follow: threonine 21, threonine 23, and threonine 30. An O-linked (GalNAc...) serine glycan is attached at serine 31. N-linked (GlcNAc...) asparagine glycosylation occurs at asparagine 39. O-linked (GalNAc...) threonine glycosylation is found at threonine 41 and threonine 48. Residues 63-85 traverse the membrane as a helical segment; that stretch reads ITGIIFAVMAGLLLIIFLIAYLI. The Cytoplasmic portion of the chain corresponds to 86–133; that stretch reads RRMIKKPLPVPKPQDSPDIGTENTADPSELQDTEDPPLTSVEIETPAS. The segment at 93–133 is disordered; sequence LPVPKPQDSPDIGTENTADPSELQDTEDPPLTSVEIETPAS.

The protein belongs to the glycophorin-A family. In terms of assembly, homodimer. Component of the ankyrin-1 complex in the erythrocyte, composed of ANK1, RHCE, RHAG, SLC4A1, EPB42, GYPA, GYPB and AQP1. Interacts with SLC4A1; a GYPA monomer is bound at each end of the SLC4A1 dimer forming a heterotetramer.

It localises to the membrane. Functionally, component of the ankyrin-1 complex, a multiprotein complex involved in the stability and shape of the erythrocyte membrane. Glycophorin A is the major intrinsic membrane protein of the erythrocyte. The N-terminal glycosylated segment, which lies outside the erythrocyte membrane, has MN blood group receptors. Appears to be important for the function of SLC4A1 and is required for high activity of SLC4A1. May be involved in translocation of SLC4A1 to the plasma membrane. In Sus scrofa (Pig), this protein is Glycophorin-A.